A 321-amino-acid chain; its full sequence is MGNVVQERQGALAQGEVLPRPAASQSEGFKQGRSVLNSLVSGAFAGAVAKTAVAPLDRTKIIFQVSSNRFSAKEAYRLIYRTYLKDGFFSLWRGNSATMVRVIPYAAIQFCAHEQYKGILGKYYGFQGKALPPVPRLLAGSLAGTTAAIITYPLDMVRARMAVTPKEMYSNIMDVFVRISREEGLKTLYRGFTPTILGVVPYAGLSFFTYETLKKTHAEKTGRAHPFPYERLVFGACAGLIGQSASYPLDVVRRRMQTAGVTGHTYSTVLGTMREIVAEEGIVRGLYKGLSMNWVKGPIAVGISFMTFDLTQILLRKFQLL.

3 Solcar repeats span residues 33–119 (RSVL…YKGI), 131–216 (LPPV…LKKT), and 226–314 (PFPY…TQIL). 6 helical membrane-spanning segments follow: residues 35–55 (VLNSLVSGAFAGAVAKTAVAP), 91–111 (LWRGNSATMVRVIPYAAIQFC), 137–154 (LLAGSLAGTTAAIITYPL), 191–208 (GFTPTILGVVPYAGLSFF), 232–252 (LVFGACAGLIGQSASYPLDVV), and 295–315 (VKGPIAVGISFMTFDLTQILL).

This sequence belongs to the mitochondrial carrier (TC 2.A.29) family.

The protein resides in the mitochondrion inner membrane. It catalyses the reaction ADP(out) + CoA(in) = ADP(in) + CoA(out). It carries out the reaction 3'-dephospho-CoA(in) + ADP(out) = 3'-dephospho-CoA(out) + ADP(in). The enzyme catalyses adenosine 3',5'-bisphosphate(in) + ADP(out) = adenosine 3',5'-bisphosphate(out) + ADP(in). The catalysed reaction is AMP(in) + ADP(out) = AMP(out) + ADP(in). It catalyses the reaction dADP(in) + ADP(out) = dADP(out) + ADP(in). It carries out the reaction ADP(in) + ATP(out) = ADP(out) + ATP(in). Functionally, mitochondrial carrier mediating the transport of coenzyme A (CoA) in mitochondria in exchange for intramitochondrial (deoxy)adenine nucleotides and adenosine 3',5'-diphosphate. This Danio rerio (Zebrafish) protein is Mitochondrial coenzyme A transporter SLC25A42 (slc25a42).